A 526-amino-acid chain; its full sequence is Amine oxidase [flavin-containing] A (526 aa).

Position 1 is an N-acetylmethionine (Met-1). The Cytoplasmic segment spans residues 1 to 497 (MTDLEKPSIT…HTFLERNLPS (497 aa)). Ser-383 is modified (phosphoserine). Cys-406 is modified (S-8alpha-FAD cysteine). The helical; Anchor for type IV membrane protein transmembrane segment at 498–518 (VPGLLKITGFSTSVALLCFVL) threads the bilayer. Residues 519–526 (YKFKQPQS) lie on the Mitochondrial intermembrane side of the membrane. The interaction with membrane phospholipid headgroups stretch occupies residues 520–522 (KFK).

This sequence belongs to the flavin monoamine oxidase family. Monomer, homo- or heterodimer (containing two subunits of similar size). Each subunit contains a covalently bound flavin. Enzymatically active as monomer. FAD serves as cofactor.

The protein resides in the mitochondrion outer membrane. It catalyses the reaction a secondary aliphatic amine + O2 + H2O = a primary amine + an aldehyde + H2O2. It carries out the reaction a primary methyl amine + O2 + H2O = an aldehyde + H2O2 + NH4(+). The catalysed reaction is serotonin + O2 + H2O = (5-hydroxyindol-3-yl)acetaldehyde + H2O2 + NH4(+). The enzyme catalyses (R)-adrenaline + O2 + H2O = (R)-3,4-dihydroxymandelaldehyde + methylamine + H2O2. It catalyses the reaction dopamine + O2 + H2O = 3,4-dihydroxyphenylacetaldehyde + H2O2 + NH4(+). It carries out the reaction tyramine + O2 + H2O = (4-hydroxyphenyl)acetaldehyde + H2O2 + NH4(+). The catalysed reaction is (R)-noradrenaline + O2 + H2O = (R)-3,4-dihydroxymandelaldehyde + H2O2 + NH4(+). The enzyme catalyses kynuramine + O2 + H2O = 3-(2-aminophenyl)-3-oxopropanal + H2O2 + NH4(+). It catalyses the reaction tryptamine + O2 + H2O = indole-3-acetaldehyde + H2O2 + NH4(+). It carries out the reaction 2-phenylethylamine + O2 + H2O = 2-phenylacetaldehyde + H2O2 + NH4(+). Functionally, catalyzes the oxidative deamination of biogenic and xenobiotic amines and has important functions in the metabolism of neuroactive and vasoactive amines in the central nervous system and peripheral tissues. Preferentially oxidizes serotonin. Also catalyzes the oxidative deamination of kynuramine to 3-(2-aminophenyl)-3-oxopropanal that can spontaneously condense to 4-hydroxyquinoline. In Mus musculus (Mouse), this protein is Amine oxidase [flavin-containing] A.